Reading from the N-terminus, the 112-residue chain is uncharacterized protein (112 aa).

Phosphoserine occurs at positions 51 and 53. Residues 90–110 form a helical membrane-spanning segment; it reads FIFTLSMFLIAFILLIAFVSF.

It is found in the golgi apparatus membrane. The protein resides in the endoplasmic reticulum membrane. This is an uncharacterized protein from Schizosaccharomyces pombe (strain 972 / ATCC 24843) (Fission yeast).